The following is a 347-amino-acid chain: Aspartate-semialdehyde dehydrogenase (347 aa).

Residues 13 to 16 (TGAV) and 41 to 42 (RS) contribute to the NADP(+) site. A phosphate-binding site is contributed by arginine 101. Cysteine 132 (acyl-thioester intermediate) is an active-site residue. Substrate is bound at residue glutamine 159. 162–163 (SG) serves as a coordination point for NADP(+). Position 216 (lysine 216) interacts with phosphate. Arginine 238 contacts substrate. Histidine 245 acts as the Proton acceptor in catalysis. Asparagine 319 contacts NADP(+).

The protein belongs to the aspartate-semialdehyde dehydrogenase family. As to quaternary structure, homodimer.

The catalysed reaction is L-aspartate 4-semialdehyde + phosphate + NADP(+) = 4-phospho-L-aspartate + NADPH + H(+). The protein operates within amino-acid biosynthesis; L-lysine biosynthesis via DAP pathway; (S)-tetrahydrodipicolinate from L-aspartate: step 2/4. Its pathway is amino-acid biosynthesis; L-methionine biosynthesis via de novo pathway; L-homoserine from L-aspartate: step 2/3. It participates in amino-acid biosynthesis; L-threonine biosynthesis; L-threonine from L-aspartate: step 2/5. In terms of biological role, catalyzes the NADPH-dependent formation of L-aspartate-semialdehyde (L-ASA) by the reductive dephosphorylation of L-aspartyl-4-phosphate. In Legionella pneumophila, this protein is Aspartate-semialdehyde dehydrogenase.